Consider the following 529-residue polypeptide: ATP synthase F(1) complex subunit beta, mitochondrial (529 aa).

A mitochondrion-targeting transit peptide spans 1–47 (MLGFVGRVAAAPASGALRRLTPSASLPPAQLLLRAAPTAVHPVRDYA). The O-linked (GlcNAc) serine glycan is linked to serine 106. N6-acetyllysine; alternate is present on residues lysine 124, lysine 133, and lysine 161. Residues lysine 124, lysine 133, and lysine 161 each carry the N6-succinyllysine; alternate modification. An N6-acetyllysine modification is found at lysine 198. ADP contacts are provided by glycine 209, valine 210, glycine 211, lysine 212, threonine 213, and valine 214. Glycine 209 contacts ATP. Glycine 209, valine 210, glycine 211, lysine 212, and threonine 213 together coordinate phosphate. The ATP site is built by glycine 211, lysine 212, threonine 213, and valine 214. Threonine 213 serves as a coordination point for Mg(2+). Glutamate 238 contributes to the Mg(2+) binding site. Arginine 239 lines the ATP pocket. N6-acetyllysine; alternate occurs at positions 259 and 264. N6-succinyllysine; alternate is present on residues lysine 259 and lysine 264. Threonine 312 bears the Phosphothreonine mark. At serine 415 the chain carries Phosphoserine. N6-acetyllysine is present on lysine 426. Serine 433 bears the Phosphoserine mark. Residues lysine 480 and lysine 485 each carry the N6-acetyllysine modification. At lysine 522 the chain carries N6-acetyllysine; alternate. N6-succinyllysine; alternate is present on lysine 522. Position 529 is a phosphoserine (serine 529).

The protein belongs to the ATPase alpha/beta chains family. As to quaternary structure, homotrimer. Component of the ATP synthase complex composed at least of ATP5F1A/subunit alpha, ATP5F1B/subunit beta, ATP5MC1/subunit c (homooctomer), MT-ATP6/subunit a, MT-ATP8/subunit 8, ATP5ME/subunit e, ATP5MF/subunit f, ATP5MG/subunit g, ATP5MK/subunit k, ATP5MJ/subunit j, ATP5F1C/subunit gamma, ATP5F1D/subunit delta, ATP5F1E/subunit epsilon, ATP5PF/subunit F6, ATP5PB/subunit b, ATP5PD/subunit d, ATP5PO/subunit OSCP. ATP synthase complex consists of a soluble F(1) head domain (subunits alpha(3) and beta(3)) - the catalytic core - and a membrane F(0) domain - the membrane proton channel (subunits c, a, 8, e, f, g, k and j). These two domains are linked by a central stalk (subunits gamma, delta, and epsilon) rotating inside the F1 region and a stationary peripheral stalk (subunits F6, b, d, and OSCP). Interacts with PPIF. Interacts with BCL2L1 isoform BCL-X(L); the interaction mediates the association of BCL2L1 isoform BCL-X(L) with the mitochondrial membrane F(1)F(0) ATP synthase and enhances neurons metabolic efficiency. Interacts with CLN5 and PPT1. Interacts with S100A1; this interaction increases F1-ATPase activity. Interacts with MTLN. Interacts with TTC5/STRAP; the interaction results in decreased mitochondrial ATP production. Mg(2+) is required as a cofactor.

It localises to the mitochondrion inner membrane. The enzyme catalyses ATP + H2O + 4 H(+)(in) = ADP + phosphate + 5 H(+)(out). Its function is as follows. Catalytic subunit beta, of the mitochondrial membrane ATP synthase complex (F(1)F(0) ATP synthase or Complex V) that produces ATP from ADP in the presence of a proton gradient across the membrane which is generated by electron transport complexes of the respiratory chain. ATP synthase complex consist of a soluble F(1) head domain - the catalytic core - and a membrane F(1) domain - the membrane proton channel. These two domains are linked by a central stalk rotating inside the F(1) region and a stationary peripheral stalk. During catalysis, ATP synthesis in the catalytic domain of F(1) is coupled via a rotary mechanism of the central stalk subunits to proton translocation. In vivo, can only synthesize ATP although its ATP hydrolase activity can be activated artificially in vitro. With the subunit alpha (ATP5F1A), forms the catalytic core in the F(1) domain. In Homo sapiens (Human), this protein is ATP synthase F(1) complex subunit beta, mitochondrial.